The chain runs to 277 residues: Release factor glutamine methyltransferase (277 aa).

S-adenosyl-L-methionine-binding positions include 119-123, D142, and N184; that span reads GTGTG. 184 to 187 is a binding site for substrate; the sequence is NPPY.

It belongs to the protein N5-glutamine methyltransferase family. PrmC subfamily.

It catalyses the reaction L-glutaminyl-[peptide chain release factor] + S-adenosyl-L-methionine = N(5)-methyl-L-glutaminyl-[peptide chain release factor] + S-adenosyl-L-homocysteine + H(+). Methylates the class 1 translation termination release factors RF1/PrfA and RF2/PrfB on the glutamine residue of the universally conserved GGQ motif. This Enterococcus faecalis (strain ATCC 700802 / V583) protein is Release factor glutamine methyltransferase.